Reading from the N-terminus, the 1009-residue chain is Serine/threonine-protein phosphatase BSL2 homolog (1009 aa).

Residues 1 to 48 (MDVDSRMTTESDSDSDAAAQGGGGGGFGSETSSASPSAPGTPTAMGAG) are disordered. A compositionally biased stretch (low complexity) spans 29-45 (SETSSASPSAPGTPTAM). Kelch repeat units follow at residues 136 to 182 (SSAG…VATA), 240 to 288 (FLLT…TASA), 293 to 344 (LLLL…FVNA), 349 to 396 (SGGA…DAAG), and 417 to 463 (MIYV…IQAG). The disordered stretch occupies residues 549–572 (QVNGEAEHSPDREQSPDATPSVKQ). A compositionally biased stretch (basic and acidic residues) spans 553–563 (EAEHSPDREQS). Residues aspartate 711, histidine 713, aspartate 745, and asparagine 777 each coordinate Mn(2+). Histidine 778 functions as the Proton donor in the catalytic mechanism. Mn(2+) is bound by residues histidine 830 and histidine 909. The interval 984 to 1009 (NANRPPTPTRGRPQAANNDRGSLAWI) is disordered.

Belongs to the PPP phosphatase family. BSU subfamily. Requires Mn(2+) as cofactor.

It is found in the nucleus. The catalysed reaction is O-phospho-L-seryl-[protein] + H2O = L-seryl-[protein] + phosphate. It carries out the reaction O-phospho-L-threonyl-[protein] + H2O = L-threonyl-[protein] + phosphate. This is Serine/threonine-protein phosphatase BSL2 homolog (BSL2) from Oryza sativa subsp. japonica (Rice).